The chain runs to 358 residues: Probable arabinan endo-1,5-alpha-L-arabinosidase B (358 aa).

The signal sequence occupies residues 1 to 16 (MVLVATLFSLFTVSLC). Aspartate 39 acts as the Proton acceptor in catalysis. Asparagine 194 carries N-linked (GlcNAc...) asparagine glycosylation. Residues 202 to 227 (HLAKHPKTERVNSQDQNPDPLCRDSS) form a disordered region. Glutamate 233 (proton donor) is an active-site residue.

The protein belongs to the glycosyl hydrolase 43 family.

The protein localises to the secreted. It catalyses the reaction Endohydrolysis of (1-&gt;5)-alpha-arabinofuranosidic linkages in (1-&gt;5)-arabinans.. It functions in the pathway glycan metabolism; L-arabinan degradation. Functionally, endo-1,5-alpha-L-arabinanase involved in degradation of pectin. Its preferred substrate is linear 1,5-alpha-L-arabinan. This Aspergillus flavus (strain ATCC 200026 / FGSC A1120 / IAM 13836 / NRRL 3357 / JCM 12722 / SRRC 167) protein is Probable arabinan endo-1,5-alpha-L-arabinosidase B (abnB).